Consider the following 388-residue polypeptide: Protein YnjB (388 aa).

A disordered region spans residues 333–357; sequence AVWGDPSVLDPQKLPDGQRESLQSR.

This chain is Protein YnjB (ynjB), found in Escherichia coli (strain K12).